The following is a 587-amino-acid chain: MQIFLFFFSLILCFVLISSQTLEDDKKALLHFLSSFNSSRLHWNQSSDVCHSWTGVTCNENGDRIVSVRLPAVGFNGLIPPFTISRLSSLKFLSLRKNHFTGDFPSDFTNLKSLTHLYLQHNHLSGPLLAIFSELKNLKVLDLSNNGFNGSIPTSLSGLTSLQVLNLANNSFSGEIPNLHLPKLSQINLSNNKLIGTIPKSLQRFQSSAFSGNNLTERKKQRKTPFGLSQLAFLLILSAACVLCVSGLSFIMITCFGKTRISGKLRKRDSSSPPGNWTSRDDNTEEGGKIIFFGGRNHLFDLDDLLSSSAEVLGKGAFGTTYKVTMEDMSTVVVKRLKEVVVGRREFEQQMEIIGMIRHENVAELKAYYYSKDDKLAVYSYYNHGSLFEILHGNRGRYHRVPLDWDARLRIATGAARGLAKIHEGKFIHGNIKSSNIFLDSQCYGCIGDVGLTTIMRSLPQTTCLTSGYHAPEITDTRRSTQFSDVYSFGVVLLELLTGKSPVSQAELVPTGGENMDLASWIRSVVAKEWTGEVFDMEILSQSGGFEEEMVEMLQIGLACVALKQQERPHIAQVLKLIEDIRSVDAE.

Positions Met-1–Ser-19 are cleaved as a signal peptide. Residues Gln-20–Ala-232 are Extracellular-facing. N-linked (GlcNAc...) asparagine glycosylation is found at Asn-37 and Asn-44. 5 LRR repeats span residues Ser-89–Lys-112, Ser-113–Lys-136, Asn-137–Thr-160, Ser-161–Lys-183, and Leu-184–Phe-205. N-linked (GlcNAc...) asparagine glycosylation is found at Asn-149, Asn-169, Asn-188, and Asn-214. The chain crosses the membrane as a helical span at residues Phe-233–Ile-253. Residues Thr-254–Glu-587 lie on the Cytoplasmic side of the membrane. The Protein kinase domain maps to Ser-307–Ile-581. Ser-309 is subject to Phosphoserine. ATP-binding positions include Leu-313–Thr-321 and Lys-335. Position 386 is a phosphoserine (Ser-386). Phosphothreonine occurs at positions 462, 463, 466, and 477.

The protein localises to the cell membrane. The polypeptide is Putative inactive receptor-like protein kinase At1g64210 (Arabidopsis thaliana (Mouse-ear cress)).